A 255-amino-acid chain; its full sequence is Probable transcriptional regulatory protein PCC8801_2028 (255 aa).

It belongs to the TACO1 family.

The protein resides in the cytoplasm. This chain is Probable transcriptional regulatory protein PCC8801_2028, found in Rippkaea orientalis (strain PCC 8801 / RF-1) (Cyanothece sp. (strain PCC 8801)).